The sequence spans 919 residues: Eukaryotic translation initiation factor 3 subunit C (919 aa).

Residues 1–28 (MSRFFANGSDSESESSEEEVQAPNFNKA) are disordered. Positions 11 to 20 (SESESSEEEV) are enriched in acidic residues. 3 positions are modified to phosphoserine: Ser34, Ser165, and Ser177. Residues 154 to 275 (LSRFRENPQE…EQKIKLRKRA (122 aa)) form a disordered region. Over residues 162 to 171 (QEESENEDEE) the composition is skewed to acidic residues. Residues 210 to 236 (ADDEDSDESIDWDPDTESETESSEDEN) are compositionally biased toward acidic residues. The segment covering 241-269 (MRERFLKRSTEKDDKDDDKRKDKRKEQKI) has biased composition (basic and acidic residues). A PCI domain is found at 640–816 (FHMHINLELL…ETVVMHRSEP (177 aa)). The interval 848 to 919 (FFQRGNMGNR…QQQVQTIDEE (72 aa)) is disordered. Residues 883-894 (QRNRNQRGHHKN) are compositionally biased toward basic residues. The span at 895–919 (QQNQNQQQQQQHQREQQQVQTIDEE) shows a compositional bias: low complexity.

Belongs to the eIF-3 subunit C family. Component of the eukaryotic translation initiation factor 3 (eIF-3) complex. The eIF-3 complex interacts with pix.

The protein resides in the cytoplasm. In terms of biological role, component of the eukaryotic translation initiation factor 3 (eIF-3) complex, which is involved in protein synthesis of a specialized repertoire of mRNAs and, together with other initiation factors, stimulates binding of mRNA and methionyl-tRNAi to the 40S ribosome. The eIF-3 complex specifically targets and initiates translation of a subset of mRNAs involved in cell proliferation. This chain is Eukaryotic translation initiation factor 3 subunit C, found in Drosophila willistoni (Fruit fly).